The following is a 227-amino-acid chain: Cytochrome c oxidase subunit 2 (227 aa).

Topologically, residues 1–14 are mitochondrial intermembrane; sequence MANHSQLGFQDASS. A helical transmembrane segment spans residues 15–45; it reads PIMEELVEFHDHALMVALAICSLVLYLLTLM. Over 46–58 the chain is Mitochondrial matrix; it reads LTQKLSSNTVDAQ. The helical transmembrane segment at 59–86 threads the bilayer; that stretch reads EVELIWTILPAIVLVLLALPSLQILYMM. Residues 87–227 are Mitochondrial intermembrane-facing; that stretch reads DEIEEPDLTL…FETWSSLLSS (141 aa). Histidine 160, cysteine 195, glutamate 197, cysteine 199, histidine 203, and methionine 206 together coordinate Cu cation. Glutamate 197 serves as a coordination point for Mg(2+).

It belongs to the cytochrome c oxidase subunit 2 family. Component of the cytochrome c oxidase (complex IV, CIV), a multisubunit enzyme composed of 14 subunits. The complex is composed of a catalytic core of 3 subunits MT-CO1, MT-CO2 and MT-CO3, encoded in the mitochondrial DNA, and 11 supernumerary subunits COX4I, COX5A, COX5B, COX6A, COX6B, COX6C, COX7A, COX7B, COX7C, COX8 and NDUFA4, which are encoded in the nuclear genome. The complex exists as a monomer or a dimer and forms supercomplexes (SCs) in the inner mitochondrial membrane with NADH-ubiquinone oxidoreductase (complex I, CI) and ubiquinol-cytochrome c oxidoreductase (cytochrome b-c1 complex, complex III, CIII), resulting in different assemblies (supercomplex SCI(1)III(2)IV(1) and megacomplex MCI(2)III(2)IV(2)). Found in a complex with TMEM177, COA6, COX18, COX20, SCO1 and SCO2. Interacts with TMEM177 in a COX20-dependent manner. Interacts with COX20. Interacts with COX16. Cu cation serves as cofactor.

Its subcellular location is the mitochondrion inner membrane. It catalyses the reaction 4 Fe(II)-[cytochrome c] + O2 + 8 H(+)(in) = 4 Fe(III)-[cytochrome c] + 2 H2O + 4 H(+)(out). Component of the cytochrome c oxidase, the last enzyme in the mitochondrial electron transport chain which drives oxidative phosphorylation. The respiratory chain contains 3 multisubunit complexes succinate dehydrogenase (complex II, CII), ubiquinol-cytochrome c oxidoreductase (cytochrome b-c1 complex, complex III, CIII) and cytochrome c oxidase (complex IV, CIV), that cooperate to transfer electrons derived from NADH and succinate to molecular oxygen, creating an electrochemical gradient over the inner membrane that drives transmembrane transport and the ATP synthase. Cytochrome c oxidase is the component of the respiratory chain that catalyzes the reduction of oxygen to water. Electrons originating from reduced cytochrome c in the intermembrane space (IMS) are transferred via the dinuclear copper A center (CU(A)) of subunit 2 and heme A of subunit 1 to the active site in subunit 1, a binuclear center (BNC) formed by heme A3 and copper B (CU(B)). The BNC reduces molecular oxygen to 2 water molecules using 4 electrons from cytochrome c in the IMS and 4 protons from the mitochondrial matrix. This is Cytochrome c oxidase subunit 2 (MT-CO2) from Coturnix japonica (Japanese quail).